The chain runs to 86 residues: Colicin-E2 immunity protein (86 aa).

This sequence belongs to the colicins ColE2/ColE8/ColE9 and pyocins S1/S2 family.

This protein is able to protect a cell, which harbors the plasmid ColE2 encoding colicin E2, against colicin E2. In Escherichia coli, this protein is Colicin-E2 immunity protein (imm).